The following is a 447-amino-acid chain: Rab GDP dissociation inhibitor alpha (447 aa).

Ser427 carries the phosphoserine modification.

It belongs to the Rab GDI family. As to quaternary structure, interacts with RHOH. Interacts with the non-phosphorylated forms of RAB1A, RAB3A, RAB5A, RAB5B, RAB5C, RAB8A, RAB8B, RAB10, RAB12, RAB35, and RAB43. Interacts with RAB3A.

Its subcellular location is the cytoplasm. The protein resides in the golgi apparatus. The protein localises to the trans-Golgi network. In terms of biological role, regulates the GDP/GTP exchange reaction of most Rab proteins by inhibiting the dissociation of GDP from them, and the subsequent binding of GTP to them. Promotes the dissociation of GDP-bound Rab proteins from the membrane and inhibits their activation. Promotes the dissociation of RAB1A, RAB3A, RAB5A and RAB10 from membranes. The protein is Rab GDP dissociation inhibitor alpha (GDI1) of Bos taurus (Bovine).